We begin with the raw amino-acid sequence, 413 residues long: MAP kinase-interacting serine/threonine-protein kinase 1 (413 aa).

The segment at 1–26 (MGSSEPLPIVDSDKRRKKKRKTRATD) is disordered. T22 bears the Phosphothreonine; by PAK2 mark. Position 27 is a phosphoserine; by PAK2 (S27). Positions 37–321 (QLTSELLGEG…AAQVLQHPWV (285 aa)) constitute a Protein kinase domain. Residues 43–51 (LGEGAYAKV) and K66 each bind ATP. D158 acts as the Proton acceptor in catalysis. Phosphoserine occurs at positions 168 and 173. Phosphothreonine occurs at positions 197, 202, and 332.

This sequence belongs to the protein kinase superfamily. CAMK Ser/Thr protein kinase family. In terms of assembly, interacts with the C-terminal regions of EIF4G1 and EIF4G2. Also binds to dephosphorylated ERK1 and ERK2, and to the p38 kinases. The cofactor is Mg(2+). Post-translationally, dual phosphorylation of Thr-197 and Thr-202 activates the kinase. Phosphorylation of Thr-332 activates the kinase. MAPK3/ERK1 is one of the kinases which activate MKNK1/MNK1. Phosphorylation by PAK2 leads to a reduced phosphorylation of EIF4G1.

It catalyses the reaction L-seryl-[protein] + ATP = O-phospho-L-seryl-[protein] + ADP + H(+). The enzyme catalyses L-threonyl-[protein] + ATP = O-phospho-L-threonyl-[protein] + ADP + H(+). Its activity is regulated as follows. Phosphorylated and activated by the p38 kinases and kinases in the Erk pathway. Its function is as follows. May play a role in the response to environmental stress and cytokines. Appears to regulate translation by phosphorylating EIF4E, thus increasing the affinity of this protein for the 7-methylguanosine-containing mRNA cap. This Rattus norvegicus (Rat) protein is MAP kinase-interacting serine/threonine-protein kinase 1 (Mknk1).